The chain runs to 152 residues: SsrA-binding protein (152 aa).

Belongs to the SmpB family.

It is found in the cytoplasm. Required for rescue of stalled ribosomes mediated by trans-translation. Binds to transfer-messenger RNA (tmRNA), required for stable association of tmRNA with ribosomes. tmRNA and SmpB together mimic tRNA shape, replacing the anticodon stem-loop with SmpB. tmRNA is encoded by the ssrA gene; the 2 termini fold to resemble tRNA(Ala) and it encodes a 'tag peptide', a short internal open reading frame. During trans-translation Ala-aminoacylated tmRNA acts like a tRNA, entering the A-site of stalled ribosomes, displacing the stalled mRNA. The ribosome then switches to translate the ORF on the tmRNA; the nascent peptide is terminated with the 'tag peptide' encoded by the tmRNA and targeted for degradation. The ribosome is freed to recommence translation, which seems to be the essential function of trans-translation. The protein is SsrA-binding protein of Rickettsia africae (strain ESF-5).